The following is a 31-amino-acid chain: Cytochrome b6-f complex subunit 6 (31 aa).

The chain crosses the membrane as a helical span at residues 3-23; sequence IITSYFGFLLTALTIASALFI.

Belongs to the PetL family. As to quaternary structure, the 4 large subunits of the cytochrome b6-f complex are cytochrome b6, subunit IV (17 kDa polypeptide, PetD), cytochrome f and the Rieske protein, while the 4 small subunits are PetG, PetL, PetM and PetN. The complex functions as a dimer.

Its subcellular location is the plastid. It is found in the chloroplast thylakoid membrane. In terms of biological role, component of the cytochrome b6-f complex, which mediates electron transfer between photosystem II (PSII) and photosystem I (PSI), cyclic electron flow around PSI, and state transitions. PetL is important for photoautotrophic growth as well as for electron transfer efficiency and stability of the cytochrome b6-f complex. This Helianthus annuus (Common sunflower) protein is Cytochrome b6-f complex subunit 6.